A 263-amino-acid chain; its full sequence is Endonuclease 8 (263 aa).

Pro-2 serves as the catalytic Schiff-base intermediate with DNA. Glu-3 functions as the Proton donor in the catalytic mechanism. Lys-53 functions as the Proton donor; for beta-elimination activity in the catalytic mechanism. Positions 70, 125, and 169 each coordinate DNA. The FPG-type zinc finger occupies 229–263; the sequence is KVFHRDGESCERCGGIIERTMLSSRPFYWCPHCQR. Arg-253 acts as the Proton donor; for delta-elimination activity in catalysis.

It belongs to the FPG family. Zn(2+) serves as cofactor.

It carries out the reaction 2'-deoxyribonucleotide-(2'-deoxyribose 5'-phosphate)-2'-deoxyribonucleotide-DNA = a 3'-end 2'-deoxyribonucleotide-(2,3-dehydro-2,3-deoxyribose 5'-phosphate)-DNA + a 5'-end 5'-phospho-2'-deoxyribonucleoside-DNA + H(+). In terms of biological role, involved in base excision repair of DNA damaged by oxidation or by mutagenic agents. Acts as a DNA glycosylase that recognizes and removes damaged bases. Has a preference for oxidized pyrimidines, such as thymine glycol, 5,6-dihydrouracil and 5,6-dihydrothymine. Has AP (apurinic/apyrimidinic) lyase activity and introduces nicks in the DNA strand. Cleaves the DNA backbone by beta-delta elimination to generate a single-strand break at the site of the removed base with both 3'- and 5'-phosphates. This chain is Endonuclease 8, found in Pectobacterium carotovorum subsp. carotovorum (strain PC1).